A 452-amino-acid chain; its full sequence is MEKDYLRISSTVLVSLLFGLALVLVNSWFNQPGVEEVVPRSTYLMVMIALFFIDTVAFIFMQLYFIYDRRQFSNCVLSLAFLSCLIYFVITVIIIQQIIEERLTSSVVQNDIAIYYLFRQMSLCILIFLALVNKVSENTKQRNLFSKKMTLCISLFFVFGGPIVAHILSSHYESYNLHIAELTNENGQVVWKASYVTIMIFMWLTLLSVNLYFNGLRYDIWNGVTVIAFCAVLYNISLLFMSRYSVSTWYISRTIEVVSKLTVMVIFMCHIFSALRVTKNIAHRDPLTNIFNRNYFFNELTVQSASAQKTPYCVMIMDIDHFKKVNDTWGHPVGDQVIKTVVNIIGKSIRPDDLLARVGGEEFGVLLTDIDTERAKALAERIRENVERLTGDNPEYAIPQKVTISIGAVVTQENALNPNEIYRLADNALYEAKETGRNKVVVRDVVNFCESP.

The Cytoplasmic portion of the chain corresponds to 1-7 (MEKDYLR). The chain crosses the membrane as a helical span at residues 8 to 28 (ISSTVLVSLLFGLALVLVNSW). Residues 29 to 45 (FNQPGVEEVVPRSTYLM) lie on the Periplasmic side of the membrane. The helical transmembrane segment at 46–66 (VMIALFFIDTVAFIFMQLYFI) threads the bilayer. The Cytoplasmic portion of the chain corresponds to 67-74 (YDRRQFSN). A helical transmembrane segment spans residues 75–95 (CVLSLAFLSCLIYFVITVIII). Topologically, residues 96-111 (QQIIEERLTSSVVQND) are periplasmic. Residues 112 to 132 (IAIYYLFRQMSLCILIFLALV) traverse the membrane as a helical segment. Residues 133-148 (NKVSENTKQRNLFSKK) lie on the Cytoplasmic side of the membrane. The helical transmembrane segment at 149 to 169 (MTLCISLFFVFGGPIVAHILS) threads the bilayer. The Periplasmic portion of the chain corresponds to 170–195 (SHYESYNLHIAELTNENGQVVWKASY). The helical transmembrane segment at 196-216 (VTIMIFMWLTLLSVNLYFNGL) threads the bilayer. Residues 217 to 219 (RYD) are Cytoplasmic-facing. The helical transmembrane segment at 220–240 (IWNGVTVIAFCAVLYNISLLF) threads the bilayer. The Periplasmic portion of the chain corresponds to 241–254 (MSRYSVSTWYISRT). Residues 255 to 275 (IEVVSKLTVMVIFMCHIFSAL) traverse the membrane as a helical segment. At 276-452 (RVTKNIAHRD…RDVVNFCESP (177 aa)) the chain is on the cytoplasmic side. One can recognise a GGDEF domain in the interval 310 to 445 (TPYCVMIMDI…GRNKVVVRDV (136 aa)). Positions 318 and 319 each coordinate Mg(2+). Substrate is bound by residues asparagine 326, histidine 331, and aspartate 335. Glutamate 361 provides a ligand contact to Mg(2+). The active-site Proton acceptor is the glutamate 361. Substrate is bound at residue arginine 381.

In terms of assembly, homodimer. It depends on Mg(2+) as a cofactor.

The protein localises to the cell inner membrane. It catalyses the reaction 2 GTP = 3',3'-c-di-GMP + 2 diphosphate. It participates in purine metabolism; 3',5'-cyclic di-GMP biosynthesis. Probably catalyzes the synthesis of cyclic-di-GMP (c-di-GMP) via the condensation of 2 GTP molecules. Overexpression leads to a strong repression of swimming; swimming returns to normal when residues 359-360 are both mutated to Ala. Overexpression also leads to a 20-fold increase in c-di-GMP levels in vivo. Cyclic-di-GMP is a second messenger which controls cell surface-associated traits in bacteria. The polypeptide is Probable diguanylate cyclase DgcT (Escherichia coli (strain K12)).